A 675-amino-acid chain; its full sequence is NADH-ubiquinone oxidoreductase 75 kDa subunit (675 aa).

The 79-residue stretch at 2–80 (KNISFKVNDF…SMNIYTNTLK (79 aa)) folds into the 2Fe-2S ferredoxin-type domain. Residues C36, C47, C50, and C64 each coordinate [2Fe-2S] cluster. A 4Fe-4S His(Cys)3-ligated-type domain is found at 80 to 119 (KVKKARESVLEFLLANHPLDCPICDQGGECDLQDQSVVFG). Residues H96, C100, C103, C109, C148, C151, C154, and C198 each coordinate [4Fe-4S] cluster. The 57-residue stretch at 217-273 (LKSYNSIDVLDSLHSNIRVDIRGTKIMRILPRVNSELNEDWITDKIRFSYDSFRRQR) folds into the 4Fe-4S Mo/W bis-MGD-type domain.

This sequence belongs to the complex I 75 kDa subunit family. In terms of assembly, complex I is composed of about 30 different subunits. [2Fe-2S] cluster is required as a cofactor. The cofactor is [4Fe-4S] cluster.

Its subcellular location is the mitochondrion inner membrane. The catalysed reaction is a ubiquinone + NADH + 5 H(+)(in) = a ubiquinol + NAD(+) + 4 H(+)(out). Its function is as follows. Core subunit of the mitochondrial membrane respiratory chain NADH dehydrogenase (Complex I) that is believed to belong to the minimal assembly required for catalysis. Complex I functions in the transfer of electrons from NADH to the respiratory chain. The immediate electron acceptor for the enzyme is believed to be ubiquinone. This is the largest subunit of complex I and it is a component of the iron-sulfur (IP) fragment of the enzyme. It may form part of the active site crevice where NADH is oxidized. The protein is NADH-ubiquinone oxidoreductase 75 kDa subunit (NAD11) of Acanthamoeba castellanii (Amoeba).